The following is a 117-amino-acid chain: Large ribosomal subunit protein bL20c (117 aa).

The protein belongs to the bacterial ribosomal protein bL20 family.

The protein localises to the plastid. It is found in the chloroplast. Functionally, binds directly to 23S ribosomal RNA and is necessary for the in vitro assembly process of the 50S ribosomal subunit. It is not involved in the protein synthesizing functions of that subunit. In Thalassiosira pseudonana (Marine diatom), this protein is Large ribosomal subunit protein bL20c.